The chain runs to 174 residues: Translation initiation factor IF-3 (174 aa).

This sequence belongs to the IF-3 family. As to quaternary structure, monomer.

It localises to the cytoplasm. In terms of biological role, IF-3 binds to the 30S ribosomal subunit and shifts the equilibrium between 70S ribosomes and their 50S and 30S subunits in favor of the free subunits, thus enhancing the availability of 30S subunits on which protein synthesis initiation begins. The polypeptide is Translation initiation factor IF-3 (Helicobacter hepaticus (strain ATCC 51449 / 3B1)).